A 1960-amino-acid polypeptide reads, in one-letter code: Exophilin-5 (1960 aa).

A RabBD domain is found at 7 to 63; that stretch reads GFDFSFLNEEEARKILQVLERNEELRRAEKDRISKLQKTKRDIRWLQGATGEWFEEI. 3 stretches are compositionally biased toward polar residues: residues 325 to 334, 342 to 366, and 635 to 645; these read ASPATGSFTA, DTQN…LSSI, and SQSSSFPDSTA. Disordered stretches follow at residues 325-366, 616-645, 672-720, 734-835, and 910-976; these read ASPA…LSSI, TPAS…DSTA, HSTD…TGLP, DFQN…SSNT, and FSRS…KGRV. Low complexity predominate over residues 673-682; sequence STDSLSLTDT. The span at 692–707 shows a compositional bias: basic and acidic residues; it reads NSEKDMDVSVSKDEQL. Residues Ser-799 and Ser-802 each carry the phosphoserine modification. Composition is skewed to polar residues over residues 808–835 and 910–920; these read ESGT…SSNT and FSRSLSDQDPG. Positions 921 to 932 are enriched in basic and acidic residues; sequence QEQREEKDKATK. Polar residues predominate over residues 933–945; sequence SQDNQLAVNSTDN. Ser-1027 carries the post-translational modification Phosphoserine. Residues 1035–1095 form a disordered region; it reads QESKGTVASV…PKATKKMTDM (61 aa). Residues 1062–1074 show a composition bias toward polar residues; that stretch reads GKSTSDKPSSPES. Ser-1083 and Ser-1117 each carry phosphoserine. Disordered stretches follow at residues 1291-1375, 1389-1493, and 1510-1759; these read AQVQ…LSRE, PLLH…DSES, and EAQP…EPHL. Basic and acidic residues predominate over residues 1318–1336; the sequence is PESKDVSQLPDRETSKSTL. The segment covering 1356-1365 has biased composition (polar residues); it reads KEISPSNVSK. A compositionally biased stretch (basic and acidic residues) spans 1392-1403; sequence HQEKGAGKEHTK. 2 stretches are compositionally biased toward polar residues: residues 1470–1493 and 1520–1533; these read RETS…DSES and SEAS…TNTA. Ser-1493 is subject to Phosphoserine. Basic and acidic residues-rich tracts occupy residues 1534–1546 and 1561–1571; these read EMRK…HMLT and TNTDETKDRYS. The span at 1572–1586 shows a compositional bias: basic residues; it reads GKHRLAAISKASKRI. Residues 1637 to 1657 are compositionally biased toward polar residues; it reads ESSQMNVDKSETLLQETTVSS. Phosphoserine occurs at positions 1724, 1739, 1789, and 1819. Positions 1732 to 1741 are enriched in polar residues; the sequence is TQKSTINSHC. Disordered stretches follow at residues 1828–1847 and 1906–1960; these read ESES…STSS and VNSP…ESEL. Positions 1939 to 1950 are enriched in acidic residues; the sequence is WDTDTTTDDEYY. Residues 1951 to 1960 show a composition bias toward basic and acidic residues; it reads LDEKDKESEL.

Interacts with RAB27A.

Its function is as follows. May act as Rab effector protein and play a role in vesicle trafficking. This Mus musculus (Mouse) protein is Exophilin-5.